We begin with the raw amino-acid sequence, 503 residues long: Glycerol kinase (503 aa).

Thr14 lines the ADP pocket. Residues Thr14, Thr15, and Ser16 each coordinate ATP. Residue Thr14 coordinates sn-glycerol 3-phosphate. Residue Arg18 participates in ADP binding. Sn-glycerol 3-phosphate-binding residues include Arg84, Glu85, Tyr136, and Asp246. Residues Arg84, Glu85, Tyr136, Asp246, and Gln247 each contribute to the glycerol site. Thr268 and Gly311 together coordinate ADP. ATP contacts are provided by Thr268, Gly311, Gln315, and Gly412. 2 residues coordinate ADP: Gly412 and Asn416. Residues 468–481 (ERTFSPDSDNEKRE) are compositionally biased toward basic and acidic residues. The interval 468–489 (ERTFSPDSDNEKRERRYKGWKK) is disordered.

This sequence belongs to the FGGY kinase family.

It catalyses the reaction glycerol + ATP = sn-glycerol 3-phosphate + ADP + H(+). Its pathway is polyol metabolism; glycerol degradation via glycerol kinase pathway; sn-glycerol 3-phosphate from glycerol: step 1/1. With respect to regulation, inhibited by fructose 1,6-bisphosphate (FBP). Functionally, key enzyme in the regulation of glycerol uptake and metabolism. Catalyzes the phosphorylation of glycerol to yield sn-glycerol 3-phosphate. The sequence is that of Glycerol kinase from Haemophilus influenzae (strain ATCC 51907 / DSM 11121 / KW20 / Rd).